Here is a 259-residue protein sequence, read N- to C-terminus: Peptide methionine sulfoxide reductase (259 aa).

Residues 66–90 (TRTPADASMDQSSIAQGPDDDIPAP) are disordered.

It belongs to the MsrA Met sulfoxide reductase family.

It catalyses the reaction L-methionyl-[protein] + [thioredoxin]-disulfide + H2O = L-methionyl-(S)-S-oxide-[protein] + [thioredoxin]-dithiol. It carries out the reaction [thioredoxin]-disulfide + L-methionine + H2O = L-methionine (S)-S-oxide + [thioredoxin]-dithiol. Its function is as follows. Has an important function as a repair enzyme for proteins that have been inactivated by oxidation. Catalyzes the reversible oxidation-reduction of methionine sulfoxide in proteins to methionine. The sequence is that of Peptide methionine sulfoxide reductase from Lactuca sativa (Garden lettuce).